Reading from the N-terminus, the 427-residue chain is Enolase (427 aa).

A (2R)-2-phosphoglycerate-binding site is contributed by Q163. The Proton donor role is filled by E205. Residues D242, E285, and D312 each contribute to the Mg(2+) site. The (2R)-2-phosphoglycerate site is built by K337, R366, S367, and K388. The active-site Proton acceptor is the K337.

This sequence belongs to the enolase family. Mg(2+) is required as a cofactor.

The protein resides in the cytoplasm. It is found in the secreted. It localises to the cell surface. The catalysed reaction is (2R)-2-phosphoglycerate = phosphoenolpyruvate + H2O. The protein operates within carbohydrate degradation; glycolysis; pyruvate from D-glyceraldehyde 3-phosphate: step 4/5. In terms of biological role, catalyzes the reversible conversion of 2-phosphoglycerate (2-PG) into phosphoenolpyruvate (PEP). It is essential for the degradation of carbohydrates via glycolysis. The sequence is that of Enolase from Rhodopseudomonas palustris (strain TIE-1).